The sequence spans 399 residues: Protein HYM1 (399 aa).

Low complexity predominate over residues 363–382; sequence VSNNNASSSNVASITSPSSV. A disordered region spans residues 363–399; the sequence is VSNNNASSSNVASITSPSSVMNNQSSILTHSTSPDSR. The segment covering 383–399 has biased composition (polar residues); the sequence is MNNQSSILTHSTSPDSR.

It belongs to the Mo25 family.

In Saccharomyces cerevisiae (strain ATCC 204508 / S288c) (Baker's yeast), this protein is Protein HYM1 (HYM1).